The following is an 83-amino-acid chain: Exodeoxyribonuclease 7 small subunit (83 aa).

The protein belongs to the XseB family. As to quaternary structure, heterooligomer composed of large and small subunits.

Its subcellular location is the cytoplasm. It catalyses the reaction Exonucleolytic cleavage in either 5'- to 3'- or 3'- to 5'-direction to yield nucleoside 5'-phosphates.. Functionally, bidirectionally degrades single-stranded DNA into large acid-insoluble oligonucleotides, which are then degraded further into small acid-soluble oligonucleotides. The polypeptide is Exodeoxyribonuclease 7 small subunit (Afipia carboxidovorans (strain ATCC 49405 / DSM 1227 / KCTC 32145 / OM5) (Oligotropha carboxidovorans)).